The sequence spans 266 residues: Proteasome subunit beta type-7 (266 aa).

A propeptide spanning residues 1–33 is cleaved from the precursor; sequence MNHDPFSWGRPADSTYGAYNTQIANAGASPMVN.

It belongs to the peptidase T1B family. As to quaternary structure, the 26S proteasome consists of a 20S proteasome core and two 19S regulatory subunits. The 20S proteasome core is composed of 28 subunits that are arranged in four stacked rings, resulting in a barrel-shaped structure. The two end rings are each formed by seven alpha subunits, and the two central rings are each formed by seven beta subunits. The catalytic chamber with the active sites is on the inside of the barrel. Interacts with CIC1.

The protein resides in the cytoplasm. The protein localises to the nucleus. Non-catalytic component of the proteasome which degrades poly-ubiquitinated proteins in the cytoplasm and in the nucleus. It is essential for the regulated turnover of proteins and for the removal of misfolded proteins. The proteasome is a multicatalytic proteinase complex that is characterized by its ability to cleave peptides with Arg, Phe, Tyr, Leu, and Glu adjacent to the leaving group at neutral or slightly basic pH. It has an ATP-dependent proteolytic activity. PRE3 and PRE4 are necessary for the peptidyl-glutamyl-peptide-hydrolyzing activity. The polypeptide is Proteasome subunit beta type-7 (PRE4) (Saccharomyces cerevisiae (strain ATCC 204508 / S288c) (Baker's yeast)).